A 505-amino-acid chain; its full sequence is Putative F-box protein At1g58310 (505 aa).

The F-box domain maps to 7 to 55; sequence RDIISGLPDSLLCHILSFLNTKEAASTSVLAKKWRYLFASVPNLDFDDS.

This chain is Putative F-box protein At1g58310, found in Arabidopsis thaliana (Mouse-ear cress).